Here is a 235-residue protein sequence, read N- to C-terminus: Lipoprotein-releasing system ATP-binding protein LolD 1 (235 aa).

The ABC transporter domain occupies 5 to 234 (FEARGITKSY…DGRLQLCTPL (230 aa)). 42–49 (GASGSGKT) serves as a coordination point for ATP.

The protein belongs to the ABC transporter superfamily. Lipoprotein translocase (TC 3.A.1.125) family. As to quaternary structure, the complex is composed of two ATP-binding proteins (LolD) and two transmembrane proteins (LolC and LolE).

The protein resides in the cell inner membrane. In terms of biological role, part of the ABC transporter complex LolCDE involved in the translocation of mature outer membrane-directed lipoproteins, from the inner membrane to the periplasmic chaperone, LolA. Responsible for the formation of the LolA-lipoprotein complex in an ATP-dependent manner. The sequence is that of Lipoprotein-releasing system ATP-binding protein LolD 1 from Chlorobium luteolum (strain DSM 273 / BCRC 81028 / 2530) (Pelodictyon luteolum).